Here is a 113-residue protein sequence, read N- to C-terminus: Nucleoid-associated protein P9303_00241 (113 aa).

The tract at residues 90-113 (TTTMKEQMEELTGGLNLNLPGMSD) is disordered.

It belongs to the YbaB/EbfC family. Homodimer.

Its subcellular location is the cytoplasm. It localises to the nucleoid. Functionally, binds to DNA and alters its conformation. May be involved in regulation of gene expression, nucleoid organization and DNA protection. The protein is Nucleoid-associated protein P9303_00241 of Prochlorococcus marinus (strain MIT 9303).